The chain runs to 518 residues: Light-independent protochlorophyllide reductase subunit B (518 aa).

[4Fe-4S] cluster is bound at residue aspartate 36. Catalysis depends on aspartate 299, which acts as the Proton donor. Substrate is bound at residue 434-435; that stretch reads GM.

This sequence belongs to the ChlB/BchB/BchZ family. Protochlorophyllide reductase is composed of three subunits; ChlL, ChlN and ChlB. Forms a heterotetramer of two ChlB and two ChlN subunits. The cofactor is [4Fe-4S] cluster.

It localises to the plastid. It is found in the chloroplast. It carries out the reaction chlorophyllide a + oxidized 2[4Fe-4S]-[ferredoxin] + 2 ADP + 2 phosphate = protochlorophyllide a + reduced 2[4Fe-4S]-[ferredoxin] + 2 ATP + 2 H2O. Its pathway is porphyrin-containing compound metabolism; chlorophyll biosynthesis (light-independent). Functionally, component of the dark-operative protochlorophyllide reductase (DPOR) that uses Mg-ATP and reduced ferredoxin to reduce ring D of protochlorophyllide (Pchlide) to form chlorophyllide a (Chlide). This reaction is light-independent. The NB-protein (ChlN-ChlB) is the catalytic component of the complex. The sequence is that of Light-independent protochlorophyllide reductase subunit B from Adiantum capillus-veneris (Maidenhair fern).